Reading from the N-terminus, the 199-residue chain is Putative pseudouridine methyltransferase (199 aa).

The S-adenosyl-L-methionine site is built by Leu132 and Cys186.

It belongs to the methyltransferase superfamily. TrmY family.

Its subcellular location is the cytoplasm. This chain is Putative pseudouridine methyltransferase, found in Vibrio parahaemolyticus serotype O3:K6 (strain RIMD 2210633).